Consider the following 358-residue polypeptide: 3-isopropylmalate dehydrogenase (358 aa).

Residue 76–89 (GPRWDNLTGAERPE) participates in NAD(+) binding. Substrate-binding residues include Arg-96, Arg-106, Arg-135, and Asp-225. Mg(2+) contacts are provided by Asp-225, Asp-249, and Asp-253. 283–295 (GSAPDIAGQNKAN) is an NAD(+) binding site.

The protein belongs to the isocitrate and isopropylmalate dehydrogenases family. LeuB type 1 subfamily. In terms of assembly, homodimer. The cofactor is Mg(2+). Mn(2+) is required as a cofactor.

The protein localises to the cytoplasm. It carries out the reaction (2R,3S)-3-isopropylmalate + NAD(+) = 4-methyl-2-oxopentanoate + CO2 + NADH. It participates in amino-acid biosynthesis; L-leucine biosynthesis; L-leucine from 3-methyl-2-oxobutanoate: step 3/4. Its function is as follows. Catalyzes the oxidation of 3-carboxy-2-hydroxy-4-methylpentanoate (3-isopropylmalate) to 3-carboxy-4-methyl-2-oxopentanoate. The product decarboxylates to 4-methyl-2 oxopentanoate. The polypeptide is 3-isopropylmalate dehydrogenase (Oleidesulfovibrio alaskensis (strain ATCC BAA-1058 / DSM 17464 / G20) (Desulfovibrio alaskensis)).